The following is a 239-amino-acid chain: 1-(5-phosphoribosyl)-5-[(5-phosphoribosylamino)methylideneamino] imidazole-4-carboxamide isomerase (239 aa).

The Proton acceptor role is filled by aspartate 8. The Proton donor role is filled by aspartate 129.

The protein belongs to the HisA/HisF family.

It is found in the cytoplasm. It carries out the reaction 1-(5-phospho-beta-D-ribosyl)-5-[(5-phospho-beta-D-ribosylamino)methylideneamino]imidazole-4-carboxamide = 5-[(5-phospho-1-deoxy-D-ribulos-1-ylimino)methylamino]-1-(5-phospho-beta-D-ribosyl)imidazole-4-carboxamide. It participates in amino-acid biosynthesis; L-histidine biosynthesis; L-histidine from 5-phospho-alpha-D-ribose 1-diphosphate: step 4/9. The polypeptide is 1-(5-phosphoribosyl)-5-[(5-phosphoribosylamino)methylideneamino] imidazole-4-carboxamide isomerase (Legionella pneumophila subsp. pneumophila (strain Philadelphia 1 / ATCC 33152 / DSM 7513)).